A 427-amino-acid chain; its full sequence is Homoserine O-acetyltransferase FUB5 (427 aa).

Residues 1 to 13 show a composition bias toward low complexity; that stretch reads MTTTTTAPALPTP. A disordered region spans residues 1–35; it reads MTTTTTAPALPTPIHDGLGNGTTYERSIPRPVNPF. One can recognise an AB hydrolase-1 domain in the interval 77 to 400; the sequence is NVMIICHALS…VSDDGHDAFL (324 aa). Residue serine 175 is the Nucleophile of the active site. The segment at 260–297 is disordered; sequence RFGRDTGNKKKAKNKGSETLPSNSTPIHSQGGADETPV. A compositionally biased stretch (polar residues) spans 276–287; the sequence is SETLPSNSTPIH. Catalysis depends on residues aspartate 367 and histidine 396.

It belongs to the AB hydrolase superfamily. MetX family.

It catalyses the reaction L-homoserine + acetyl-CoA = O-acetyl-L-homoserine + CoA. It functions in the pathway mycotoxin biosynthesis. Its function is as follows. Homoserine O-acetyltransferase; part of the gene cluster that mediates the biosynthesis of fusaric acid, a mycotoxin with low to moderate toxicity to animals and humans, but with high phytotoxic properties. L-aspartate is suggested as fusaric acid amino acid precursor that is activated and further processed to O-acetyl-L-homoserine by cluster enzymes aspartate kinase FUB3 and homoserine O-acetyltransferase FUB5, as well as enzymes of the primary metabolism. The polyketide synthase (PKS) FUB1 generates the triketide trans-2-hexenal which is presumptively released by the hydrolase FUB4 and linked to the NRPS-bound amino acid precursor by NAD(P)-dependent dehydrogenase FUB6. FUB1, FUB4, and the non-canonical NRPS Fub8 may form an enzyme complex. Further processing of the NRPS-bound intermediate might be carried out by FUB6 and the sulfhydrylase FUB7, enabling a spontaneous electrocyclization to close the carbon backbone of fusaric acid. Dihydrofusaric acid is likely to be released via reduction by the thioester reductase (TR) domain of FUB8 whereupon the final oxidation to fusaric acid may (also) be performed by the FMN-dependent dehydrogenase FUB9. The chain is Homoserine O-acetyltransferase FUB5 from Gibberella fujikuroi (strain CBS 195.34 / IMI 58289 / NRRL A-6831) (Bakanae and foot rot disease fungus).